Reading from the N-terminus, the 80-residue chain is Defensin-like protein 2 (80 aa).

A signal peptide spans 1–29 (MAKFASIIVLLFVALVVFAAFEEPTMVEA). Gln30 carries the pyrrolidone carboxylic acid modification. Intrachain disulfides connect Cys33–Cys80, Cys44–Cys65, Cys50–Cys74, and Cys54–Cys76.

This sequence belongs to the DEFL family.

Its subcellular location is the secreted. Possesses antifungal activity sensitive to inorganic cations. Induces potential changes in fungal membranes and increased K(+) efflux and Ca(2+) uptake. The sequence is that of Defensin-like protein 2 (AFP2) from Raphanus sativus (Radish).